A 121-amino-acid polypeptide reads, in one-letter code: Small basic protein (121 aa).

The next 3 helical transmembrane spans lie at 2–22 (WLPV…NLTI), 29–49 (YLSL…RAHL), and 57–77 (VFVS…FLGV).

The protein belongs to the sbp family.

It is found in the cell membrane. The chain is Small basic protein (sbp) from Bacillus subtilis (strain 168).